The primary structure comprises 248 residues: Geranylgeranylglyceryl phosphate synthase (248 aa).

Residues aspartate 25 and serine 50 each contribute to the Mg(2+) site. Sn-glycerol 1-phosphate is bound by residues 170-176 (YLEAGSG), 201-202 (GG), and 223-224 (GT).

Belongs to the GGGP/HepGP synthase family. Group II subfamily. It depends on Mg(2+) as a cofactor.

It is found in the cytoplasm. It catalyses the reaction sn-glycerol 1-phosphate + (2E,6E,10E)-geranylgeranyl diphosphate = sn-3-O-(geranylgeranyl)glycerol 1-phosphate + diphosphate. It participates in membrane lipid metabolism; glycerophospholipid metabolism. In terms of biological role, prenyltransferase that catalyzes the transfer of the geranylgeranyl moiety of geranylgeranyl diphosphate (GGPP) to the C3 hydroxyl of sn-glycerol-1-phosphate (G1P). This reaction is the first ether-bond-formation step in the biosynthesis of archaeal membrane lipids. This is Geranylgeranylglyceryl phosphate synthase from Methanococcus aeolicus (strain ATCC BAA-1280 / DSM 17508 / OCM 812 / Nankai-3).